A 502-amino-acid chain; its full sequence is Lysine--tRNA ligase (502 aa).

The Mg(2+) site is built by Glu409 and Glu416.

It belongs to the class-II aminoacyl-tRNA synthetase family. In terms of assembly, homodimer. Mg(2+) is required as a cofactor.

The protein localises to the cytoplasm. It carries out the reaction tRNA(Lys) + L-lysine + ATP = L-lysyl-tRNA(Lys) + AMP + diphosphate. This is Lysine--tRNA ligase from Shouchella clausii (strain KSM-K16) (Alkalihalobacillus clausii).